The chain runs to 246 residues: Small ribosomal subunit protein uS2 (246 aa).

This sequence belongs to the universal ribosomal protein uS2 family.

This is Small ribosomal subunit protein uS2 from Pseudomonas paraeruginosa (strain DSM 24068 / PA7) (Pseudomonas aeruginosa (strain PA7)).